The chain runs to 918 residues: von Willebrand factor A domain-containing protein DDB_G0292016 (918 aa).

A VIT domain is found at 44 to 172 (KRCGLYSLKN…NVKVRVVISS (129 aa)). A VWFA domain is found at 299 to 467 (EFIFLIDCSG…NMEKQVMKLL (169 aa)). Residues 625–814 (VDIMNQSPPI…PSAPSQQKSV (190 aa)) form a disordered region. Low complexity predominate over residues 650 to 690 (ASGALSSSILSRKRSSSPSTATKRSSSSSFSSSYLSLSSSS). A compositionally biased stretch (acidic residues) spans 716-746 (YESDGGDQSSEQDEEEEDDCDDFHEDLDEDL). Residues 752 to 774 (DVDKKECEKECKKKDSSKVDLKV) are compositionally biased toward basic and acidic residues. Residues 777–814 (SKVPLPSRSPSVSKPTTTSLLSPSPKSAPSAPSQQKSV) show a composition bias toward low complexity.

The protein is von Willebrand factor A domain-containing protein DDB_G0292016 of Dictyostelium discoideum (Social amoeba).